The sequence spans 507 residues: ATP synthase subunit alpha, chloroplastic (507 aa).

170 to 177 (GDRQTGKT) is an ATP binding site.

This sequence belongs to the ATPase alpha/beta chains family. In terms of assembly, F-type ATPases have 2 components, CF(1) - the catalytic core - and CF(0) - the membrane proton channel. CF(1) has five subunits: alpha(3), beta(3), gamma(1), delta(1), epsilon(1). CF(0) has four main subunits: a, b, b' and c.

The protein localises to the plastid. It localises to the chloroplast thylakoid membrane. The enzyme catalyses ATP + H2O + 4 H(+)(in) = ADP + phosphate + 5 H(+)(out). In terms of biological role, produces ATP from ADP in the presence of a proton gradient across the membrane. The alpha chain is a regulatory subunit. The protein is ATP synthase subunit alpha, chloroplastic of Eucalyptus globulus subsp. globulus (Tasmanian blue gum).